The sequence spans 273 residues: Type II restriction enzyme HgiCII (273 aa).

Belongs to the TdeIII type II restriction endonuclease family.

The enzyme catalyses Endonucleolytic cleavage of DNA to give specific double-stranded fragments with terminal 5'-phosphates.. A P subtype restriction enzyme that recognizes the double-stranded sequence 5'-GGWCC-3' and cleaves after G-1. The sequence is that of Type II restriction enzyme HgiCII from Herpetosiphon aurantiacus (Herpetosiphon giganteus).